The chain runs to 57 residues: UPF0391 membrane protein AZOSEA39630 (57 aa).

2 consecutive transmembrane segments (helical) span residues 4-24 (WAII…TGVA) and 37-57 (IALA…VLVF).

Belongs to the UPF0391 family.

It localises to the cell membrane. This is UPF0391 membrane protein AZOSEA39630 from Aromatoleum aromaticum (strain DSM 19018 / LMG 30748 / EbN1) (Azoarcus sp. (strain EbN1)).